Here is a 334-residue protein sequence, read N- to C-terminus: DCN1-like protein 3 (334 aa).

The DCUN1 domain maps to 112–301; it reads VSHQTLSKLF…LFDDFVDYEK (190 aa). The interval 308–334 is disordered; that stretch reads SGIHDDDNNNDDPLQSHVKAEDPGLVS. Basic and acidic residues predominate over residues 325–334; that stretch reads VKAEDPGLVS.

It is found in the cell membrane. Promotes neddylation of cullin components of SCF-type E3 ubiquitin ligase complexes and thus regulates SCF-type complex activity. Function promotes cell proliferation. This is DCN1-like protein 3 from Drosophila melanogaster (Fruit fly).